A 204-amino-acid chain; its full sequence is Superoxide dismutase [Mn] (204 aa).

Residues His29, His84, Asp167, and His171 each contribute to the Mn(2+) site.

It belongs to the iron/manganese superoxide dismutase family. In terms of assembly, homotetramer. Requires Mn(2+) as cofactor.

The enzyme catalyses 2 superoxide + 2 H(+) = H2O2 + O2. In terms of biological role, destroys superoxide anion radicals which are normally produced within the cells and which are toxic to biological systems. The sequence is that of Superoxide dismutase [Mn] (sodA) from Thermus thermophilus (strain ATCC BAA-163 / DSM 7039 / HB27).